The sequence spans 151 residues: Ribosome maturation factor RimP (151 aa).

Belongs to the RimP family.

It localises to the cytoplasm. Required for maturation of 30S ribosomal subunits. This Haemophilus influenzae (strain PittGG) protein is Ribosome maturation factor RimP.